A 510-amino-acid polypeptide reads, in one-letter code: ATP synthase subunit alpha (510 aa).

Residue 170–177 (GDRQTGKT) participates in ATP binding.

Belongs to the ATPase alpha/beta chains family. As to quaternary structure, F-type ATPases have 2 components, CF(1) - the catalytic core - and CF(0) - the membrane proton channel. CF(1) has five subunits: alpha(3), beta(3), gamma(1), delta(1), epsilon(1). CF(0) has three main subunits: a(1), b(2) and c(9-12). The alpha and beta chains form an alternating ring which encloses part of the gamma chain. CF(1) is attached to CF(0) by a central stalk formed by the gamma and epsilon chains, while a peripheral stalk is formed by the delta and b chains.

It localises to the cell inner membrane. It carries out the reaction ATP + H2O + 4 H(+)(in) = ADP + phosphate + 5 H(+)(out). In terms of biological role, produces ATP from ADP in the presence of a proton gradient across the membrane. The alpha chain is a regulatory subunit. The protein is ATP synthase subunit alpha of Caulobacter sp. (strain K31).